A 448-amino-acid chain; its full sequence is Protease Do-like 8, chloroplastic (448 aa).

Residues 152–333 (EGNGSGVVWD…IPSSTVLKIV (182 aa)) are serine protease. Catalysis depends on charge relay system residues His171, Asp214, and Ser292. The region spanning 336–433 (LIQFSKVLRA…DKVTLKIKRG (98 aa)) is the PDZ domain.

This sequence belongs to the peptidase S1C family.

Its subcellular location is the plastid. The protein resides in the chloroplast thylakoid lumen. Its function is as follows. Probable serine protease. The sequence is that of Protease Do-like 8, chloroplastic (DEGP8) from Arabidopsis thaliana (Mouse-ear cress).